The primary structure comprises 459 residues: Ribulose bisphosphate carboxylase/oxygenase activase, chloroplastic (459 aa).

164–171 (GGKGQGKS) contacts ATP.

Belongs to the RuBisCO activase family.

The protein localises to the plastid. Its subcellular location is the chloroplast stroma. In terms of biological role, activation of RuBisCO (ribulose-1,5-bisphosphate carboxylase/oxygenase; EC 4.1.1.39) involves the ATP-dependent carboxylation of the epsilon-amino group of lysine leading to a carbamate structure. The polypeptide is Ribulose bisphosphate carboxylase/oxygenase activase, chloroplastic (Solanum pennellii (Tomato)).